The sequence spans 492 residues: Probable glycine dehydrogenase (decarboxylating) subunit 2 (492 aa).

N6-(pyridoxal phosphate)lysine is present on Lys274.

It belongs to the GcvP family. C-terminal subunit subfamily. The glycine cleavage system is composed of four proteins: P, T, L and H. In this organism, the P 'protein' is a heterodimer of two subunits. The cofactor is pyridoxal 5'-phosphate.

It carries out the reaction N(6)-[(R)-lipoyl]-L-lysyl-[glycine-cleavage complex H protein] + glycine + H(+) = N(6)-[(R)-S(8)-aminomethyldihydrolipoyl]-L-lysyl-[glycine-cleavage complex H protein] + CO2. Functionally, the glycine cleavage system catalyzes the degradation of glycine. The P protein binds the alpha-amino group of glycine through its pyridoxal phosphate cofactor; CO(2) is released and the remaining methylamine moiety is then transferred to the lipoamide cofactor of the H protein. This Staphylococcus saprophyticus subsp. saprophyticus (strain ATCC 15305 / DSM 20229 / NCIMB 8711 / NCTC 7292 / S-41) protein is Probable glycine dehydrogenase (decarboxylating) subunit 2.